Consider the following 253-residue polypeptide: 2-dehydro-3-deoxy-D-gluconate 5-dehydrogenase (253 aa).

14 to 38 (VVTGCDTGLGQGMALGLAQAGCDIV) lines the NAD(+) pocket. A substrate-binding site is contributed by S145. Catalysis depends on Y158, which acts as the Proton acceptor.

It belongs to the short-chain dehydrogenases/reductases (SDR) family. Homotetramer.

It catalyses the reaction 2-dehydro-3-deoxy-D-gluconate + NAD(+) = 3-deoxy-D-glycero-2,5-hexodiulosonate + NADH + H(+). It carries out the reaction 4-pregnen-20,21-diol-3-one + NAD(+) = 21-hydroxyprogesterone + NADH + H(+). Functionally, catalyzes the reversible reduction of 2,5-diketo-3-deoxygluconate (DKII or 4,6-dihydroxy-2,5-dioxohexanoate) into 2-keto-3-deoxygluconate (KDG or 2-dehydro-3-deoxygluconate) with a concomitant oxidation of NADH. To a lesser extent, can also reduce 5-keto-D-gluconate and oxidize D-gluconate and 1,2-propanediol. Together with KduI, seems to play a role in the catabolism of hexuronates under osmotic stress conditions, substituting for the regular hexuronate degrading enzymes UxaABC and UxuAB whose expression is repressed in these conditions. In vitro, also exhibits NADH-dependent 20-ketosteroid reductase activity against eukaryotic steroid hormone 11-deoxycorticosterone (11-DOC), which is converted into the product 4-pregnen-20,21-diol-3-one. In addition to 11-DOC, five other C21 steroid compounds (11-deoxycortisol, cortisol, corticosterone, cortisone, and 21-hydroxypregnenolone) are reduced by KduD, but steroids lacking the hydroxyl group at C21 position, such as pregnenolone, testosterone propionate, cortisone acetate, or progesterone, cannot be used as substrate. This is 2-dehydro-3-deoxy-D-gluconate 5-dehydrogenase from Escherichia coli (strain K12).